The chain runs to 339 residues: Anthranilate phosphoribosyltransferase (339 aa).

Residues Gly79, 82-83 (GD), Thr87, 89-92 (NIST), 107-115 (KHGNRAVSS), and Ser119 each bind 5-phospho-alpha-D-ribose 1-diphosphate. Gly79 serves as a coordination point for anthranilate. Residue Ser91 coordinates Mg(2+). Asn110 lines the anthranilate pocket. Arg165 is an anthranilate binding site. Asp224 and Glu225 together coordinate Mg(2+).

This sequence belongs to the anthranilate phosphoribosyltransferase family. In terms of assembly, homodimer. Requires Mg(2+) as cofactor.

It carries out the reaction N-(5-phospho-beta-D-ribosyl)anthranilate + diphosphate = 5-phospho-alpha-D-ribose 1-diphosphate + anthranilate. It functions in the pathway amino-acid biosynthesis; L-tryptophan biosynthesis; L-tryptophan from chorismate: step 2/5. Functionally, catalyzes the transfer of the phosphoribosyl group of 5-phosphorylribose-1-pyrophosphate (PRPP) to anthranilate to yield N-(5'-phosphoribosyl)-anthranilate (PRA). This is Anthranilate phosphoribosyltransferase from Geobacillus thermodenitrificans (strain NG80-2).